The following is a 494-amino-acid chain: Glucose-6-phosphate 1-dehydrogenase (494 aa).

2 residues coordinate NADP(+): Arg46 and Lys150. Residues His180, Lys184, Glu218, and Asp237 each coordinate substrate. The active-site Proton acceptor is the His242. Position 342 (Lys342) interacts with substrate.

It belongs to the glucose-6-phosphate dehydrogenase family.

The enzyme catalyses D-glucose 6-phosphate + NADP(+) = 6-phospho-D-glucono-1,5-lactone + NADPH + H(+). The protein operates within carbohydrate degradation; pentose phosphate pathway; D-ribulose 5-phosphate from D-glucose 6-phosphate (oxidative stage): step 1/3. Functionally, catalyzes the oxidation of glucose 6-phosphate to 6-phosphogluconolactone. This is Glucose-6-phosphate 1-dehydrogenase from Aggregatibacter actinomycetemcomitans (Actinobacillus actinomycetemcomitans).